The primary structure comprises 324 residues: Serine racemase (324 aa).

ATP-binding residues include Ser32, Lys51, and Thr52. Lys56 functions as the Proton acceptor in the catalytic mechanism. Lys56 is modified (N6-(pyridoxal phosphate)lysine). Residue Thr78 coordinates Ca(2+). The active-site Proton acceptor is Ser81. Asn83 is a pyridoxal 5'-phosphate binding site. Positions 86 and 118 each coordinate ATP. Asp175 lines the Mg(2+) pocket. Pyridoxal 5'-phosphate contacts are provided by Gly182, Gly183, Gly184, and Gly185. Ca(2+) contacts are provided by Glu207, Ala211, and Asp213. Positions 207, 211, and 213 each coordinate Mg(2+). Mn(2+)-binding residues include Glu207, Ala211, and Asp213. Lys277 contributes to the ATP binding site. A pyridoxal 5'-phosphate-binding site is contributed by Ser310. Asn313 lines the ATP pocket.

Belongs to the serine/threonine dehydratase family. As to quaternary structure, homodimer. It depends on Mg(2+) as a cofactor. Mn(2+) serves as cofactor. Requires Ca(2+) as cofactor. Pyridoxal 5'-phosphate is required as a cofactor.

It carries out the reaction L-serine = D-serine. It catalyses the reaction L-serine = pyruvate + NH4(+). The catalysed reaction is D-serine = pyruvate + NH4(+). In terms of biological role, catalyzes the synthesis of D-serine from L-serine. Has dehydratase activity towards both L-serine and D-serine. In Dictyostelium discoideum (Social amoeba), this protein is Serine racemase (srr).